The following is a 134-amino-acid chain: Transcription antitermination protein NusB (134 aa).

It belongs to the NusB family.

In terms of biological role, involved in transcription antitermination. Required for transcription of ribosomal RNA (rRNA) genes. Binds specifically to the boxA antiterminator sequence of the ribosomal RNA (rrn) operons. The polypeptide is Transcription antitermination protein NusB (Shewanella woodyi (strain ATCC 51908 / MS32)).